The primary structure comprises 383 residues: MRAAVGLPEGARIVAAMSGGVDSTVTAALLARAGYDVVGVTLQLYDHGAAISRKGACCAGQDILDARMAAERIGIPHYVLDYESRFREQVIEDFADAYLRGETPIPCVRCNQTVKFRDLLDVARDLGAEAMATGHYVQRAMPGNGGNRPELRRAADPAKDQSYFLFATTREQLDFLRFPLGGMDKPTVRAVAAGLGLSIADKPDSQDICFVPEGKYTTVIDRIRPQGAEAGDVVHLDGRVLGRHEGVTRYTIGQRRGLNIAVGDPLFVVKINADKRQVIVGPREALLTASLTLKEGSWLGAQDSLEAAAEDGQRVLARVRSTREPVPGRLAMIDGALSVVFDGAEEGVAPGQACVLYDPADPDRVLGGGFIAGTTRQMDLNAA.

Residues 16–23 and Leu-42 contribute to the ATP site; that span reads AMSGGVDS. The active-site Nucleophile is Cys-110. The cysteines at positions 110 and 209 are disulfide-linked. Residue Gly-134 coordinates ATP. The tract at residues 159 to 161 is interaction with tRNA; that stretch reads KDQ. The active-site Cysteine persulfide intermediate is Cys-209.

This sequence belongs to the MnmA/TRMU family.

It is found in the cytoplasm. The catalysed reaction is S-sulfanyl-L-cysteinyl-[protein] + uridine(34) in tRNA + AH2 + ATP = 2-thiouridine(34) in tRNA + L-cysteinyl-[protein] + A + AMP + diphosphate + H(+). Its function is as follows. Catalyzes the 2-thiolation of uridine at the wobble position (U34) of tRNA, leading to the formation of s(2)U34. The protein is tRNA-specific 2-thiouridylase MnmA of Caulobacter vibrioides (strain ATCC 19089 / CIP 103742 / CB 15) (Caulobacter crescentus).